We begin with the raw amino-acid sequence, 719 residues long: Glycine--tRNA ligase beta subunit (719 aa).

A disordered region spans residues 65 to 84 (PDREEEIKGPPAKAAFKDGK).

The protein belongs to the class-II aminoacyl-tRNA synthetase family. In terms of assembly, tetramer of two alpha and two beta subunits.

The protein resides in the cytoplasm. The enzyme catalyses tRNA(Gly) + glycine + ATP = glycyl-tRNA(Gly) + AMP + diphosphate. This chain is Glycine--tRNA ligase beta subunit, found in Trichodesmium erythraeum (strain IMS101).